We begin with the raw amino-acid sequence, 426 residues long: Probable histidine--tRNA ligase (426 aa).

Belongs to the class-II aminoacyl-tRNA synthetase family. As to quaternary structure, homodimer.

Its subcellular location is the cytoplasm. The catalysed reaction is tRNA(His) + L-histidine + ATP = L-histidyl-tRNA(His) + AMP + diphosphate + H(+). This Tropheryma whipplei (strain TW08/27) (Whipple's bacillus) protein is Probable histidine--tRNA ligase (hisS).